A 232-amino-acid polypeptide reads, in one-letter code: Enolase-phosphatase E1 (232 aa).

The protein belongs to the HAD-like hydrolase superfamily. MasA/MtnC family. In terms of assembly, monomer. The cofactor is Mg(2+).

The enzyme catalyses 5-methylsulfanyl-2,3-dioxopentyl phosphate + H2O = 1,2-dihydroxy-5-(methylsulfanyl)pent-1-en-3-one + phosphate. The protein operates within amino-acid biosynthesis; L-methionine biosynthesis via salvage pathway; L-methionine from S-methyl-5-thio-alpha-D-ribose 1-phosphate: step 3/6. Its pathway is amino-acid biosynthesis; L-methionine biosynthesis via salvage pathway; L-methionine from S-methyl-5-thio-alpha-D-ribose 1-phosphate: step 4/6. Its function is as follows. Bifunctional enzyme that catalyzes the enolization of 2,3-diketo-5-methylthiopentyl-1-phosphate (DK-MTP-1-P) into the intermediate 2-hydroxy-3-keto-5-methylthiopentenyl-1-phosphate (HK-MTPenyl-1-P), which is then dephosphorylated to form the acireductone 1,2-dihydroxy-3-keto-5-methylthiopentene (DHK-MTPene). This Nocardia farcinica (strain IFM 10152) protein is Enolase-phosphatase E1.